The primary structure comprises 328 residues: Phosphoserine phosphatase (328 aa).

Aspartate 113 functions as the Nucleophile in the catalytic mechanism. The Mg(2+) site is built by aspartate 113 and aspartate 115. Residue aspartate 115 is the Proton donor of the active site. Substrate-binding positions include glutamate 122, arginine 158, 201-202 (SG), and lysine 246. Mg(2+) is bound at residue aspartate 269. Asparagine 272 contributes to the substrate binding site.

This sequence belongs to the HAD-like hydrolase superfamily. SerB family. It depends on Mg(2+) as a cofactor.

The enzyme catalyses O-phospho-L-serine + H2O = L-serine + phosphate. The catalysed reaction is O-phospho-D-serine + H2O = D-serine + phosphate. The protein operates within amino-acid biosynthesis; L-serine biosynthesis; L-serine from 3-phospho-D-glycerate: step 3/3. The protein is Phosphoserine phosphatase of Vibrio cholerae serotype O1 (strain ATCC 39315 / El Tor Inaba N16961).